The primary structure comprises 335 residues: MKLGTPRWWYVKSGAPAPVTRALLTPLSWLWADTTRRRIARATPAIVGAPVICVGNVTMGGAGKTPIVRELLLTLTQRGVAAHGLSRGYGGKLKGPVRVDTIRHTAADVGDEPLMLAQDFPMWIAADRVAGAKAAVRAGASAIVMDDGHQNPSVKKALSLVVVDGETRGGEWPFGDGRVFPAGPMREPLKVGLSRADAVIVLLPVDVEQPDFDLLVAFGDMPVLVARLEAAAPVPKGPQVGFAGIAKPWKVEKALTAAGCQLVDFAPFPDHGAYSESTLKMLADRAEVYEAGLVTTEKDWVRLPPAWRERVTPWPVRARFEDPAALEALLKGIGL.

Position 58–65 (58–65 (TMGGAGKT)) interacts with ATP.

Belongs to the LpxK family.

The enzyme catalyses a lipid A disaccharide + ATP = a lipid IVA + ADP + H(+). It functions in the pathway glycolipid biosynthesis; lipid IV(A) biosynthesis; lipid IV(A) from (3R)-3-hydroxytetradecanoyl-[acyl-carrier-protein] and UDP-N-acetyl-alpha-D-glucosamine: step 6/6. In terms of biological role, transfers the gamma-phosphate of ATP to the 4'-position of a tetraacyldisaccharide 1-phosphate intermediate (termed DS-1-P) to form tetraacyldisaccharide 1,4'-bis-phosphate (lipid IVA). The sequence is that of Tetraacyldisaccharide 4'-kinase from Caulobacter vibrioides (strain ATCC 19089 / CIP 103742 / CB 15) (Caulobacter crescentus).